The primary structure comprises 203 residues: Outer-membrane lipoprotein LolB (203 aa).

A signal peptide spans 1 to 21; sequence MRLSASLFHIALVTVLLVLAG. The N-palmitoyl cysteine moiety is linked to residue Cys-22. Cys-22 carries the S-diacylglycerol cysteine lipid modification.

This sequence belongs to the LolB family. As to quaternary structure, monomer.

The protein resides in the cell outer membrane. Functionally, plays a critical role in the incorporation of lipoproteins in the outer membrane after they are released by the LolA protein. This Shewanella frigidimarina (strain NCIMB 400) protein is Outer-membrane lipoprotein LolB.